Consider the following 367-residue polypeptide: DNA replication and repair protein RecF (367 aa).

30–37 (GNNAQGKT) lines the ATP pocket.

It belongs to the RecF family.

The protein resides in the cytoplasm. The RecF protein is involved in DNA metabolism; it is required for DNA replication and normal SOS inducibility. RecF binds preferentially to single-stranded, linear DNA. It also seems to bind ATP. This Clostridium tetani (strain Massachusetts / E88) protein is DNA replication and repair protein RecF.